Here is a 214-residue protein sequence, read N- to C-terminus: MQLFHLCLIISCTCPTLQASKLCLGWLWGMDIDPYKEFGASVELLSFLPSDFFPSVRDLLDTSAALYREALESPEHCSPHHTALRQAILCWGELMTLATWVGNNLQDPASRDQVVNYVNTNMGLKIRQLLWFHISCLTFGRQTVLEYLVSFGVWIRTPPPYRPPNAPILSTLPETTVVRRRDRGRSPRRRTPSPRRRRSQSPRRRRSQSRESQC.

The first 19 residues, 1 to 19, serve as a signal peptide directing secretion; that stretch reads MQLFHLCLIISCTCPTLQA. The HBEAG stretch occupies residues 25–27; it reads GWL. Positions 164–214 are disordered; the sequence is PNAPILSTLPETTVVRRRDRGRSPRRRTPSPRRRRSQSPRRRRSQSRESQC. The span at 178 to 207 shows a compositional bias: basic residues; sequence VRRRDRGRSPRRRTPSPRRRRSQSPRRRRS. The 1; half-length repeat unit spans residues 186-192; that stretch reads SPRRRTP. The interval 186-208 is 3 X 8 AA repeats of S-P-R-R-R-R-S-Q; it reads SPRRRTPSPRRRRSQSPRRRRSQ. A propeptide spanning residues 186-214 is cleaved from the precursor; it reads SPRRRTPSPRRRRSQSPRRRRSQSRESQC. 2 repeat units span residues 193–200 and 201–208.

The protein belongs to the orthohepadnavirus precore antigen family. As to quaternary structure, homodimerizes. Phosphorylated. Post-translationally, cleaved by host furin.

It localises to the secreted. The protein resides in the host nucleus. Its function is as follows. May regulate immune response to the intracellular capsid in acting as a T-cell tolerogen, by having an immunoregulatory effect which prevents destruction of infected cells by cytotoxic T-cells. This immune regulation may predispose to chronicity during perinatal infections and prevent severe liver injury during adult infections. This is External core antigen from Homo sapiens (Human).